We begin with the raw amino-acid sequence, 488 residues long: NADH-ubiquinone oxidoreductase chain 2 (488 aa).

14 consecutive transmembrane segments (helical) span residues 11-31 (MIKYSIYLVPLIIMILLSISI), 38-58 (MMLLFKSLKLTIILILVLLTI), 74-94 (ELITFVEYILLVVSYLIISMF), 106-126 (ITEEALILMYSSLIGMLISME), 129-149 (NLITLFLSLEITSICFYILAL), 162-182 (LKYYIIGGIASTIILLGIVSI), 211-231 (IALIVLGLIIKLGVAPFHGWL), 239-259 (GMLMTFYLTITQKIVTIIVLI), 271-291 (IEVINKGLLVLILVTLIVGTV), 299-319 (VIRFIAYSAIVNSALLILFFV), 331-351 (IYYLINYIIGLAVLINIIIGV), 376-396 (IGISLIIVLIYLAGLPPFTNF), 412-434 (IYITMIIFFLTVGIMIYYMNVVK), and 460-480 (IVGGIIWIIISQIYLDEIISI).

Belongs to the complex I subunit 2 family.

It localises to the mitochondrion inner membrane. The catalysed reaction is a ubiquinone + NADH + 5 H(+)(in) = a ubiquinol + NAD(+) + 4 H(+)(out). Core subunit of the mitochondrial membrane respiratory chain NADH dehydrogenase (Complex I) that is believed to belong to the minimal assembly required for catalysis. Complex I functions in the transfer of electrons from NADH to the respiratory chain. The immediate electron acceptor for the enzyme is believed to be ubiquinone. The sequence is that of NADH-ubiquinone oxidoreductase chain 2 (nad2) from Dictyostelium discoideum (Social amoeba).